The primary structure comprises 134 residues: U34-theraphotoxin-Cg1a (134 aa).

An N-terminal signal peptide occupies residues 1–19 (MKLAVVFLLTTVVFTLAQS). 3 disulfide bridges follow: cysteine 24-cysteine 35, cysteine 29-cysteine 53, and cysteine 63-cysteine 84. The tract at residues 97 to 134 (EQSSTSTSSTQGPITSSTVTTQSEATTETETTTAAEGK) is disordered. Residues 99-134 (SSTSTSSTQGPITSSTVTTQSEATTETETTTAAEGK) show a composition bias toward low complexity.

Belongs to the neurotoxin 32 family. As to expression, expressed by the venom gland.

The protein resides in the secreted. This chain is U34-theraphotoxin-Cg1a, found in Chilobrachys guangxiensis (Chinese earth tiger tarantula).